The primary structure comprises 256 residues: Ribonuclease 3 (256 aa).

Positions 3 to 125 (LDALQQRLGY…IVGAVFLDAG (123 aa)) constitute an RNase III domain. Glu38 lines the Mg(2+) pocket. The active site involves Asp42. Mg(2+)-binding residues include Asp111 and Glu114. The active site involves Glu114. The 71-residue stretch at 152 to 222 (DAKTLLQEYL…AKLALDEVQK (71 aa)) folds into the DRBM domain. The tract at residues 229–256 (KRSRAERTGKTRKQPQPQDPQLSLRLKE) is disordered.

This sequence belongs to the ribonuclease III family. In terms of assembly, homodimer. The cofactor is Mg(2+).

The protein localises to the cytoplasm. The catalysed reaction is Endonucleolytic cleavage to 5'-phosphomonoester.. Digests double-stranded RNA. Involved in the processing of primary rRNA transcript to yield the immediate precursors to the large and small rRNAs (23S and 16S). Processes some mRNAs, and tRNAs when they are encoded in the rRNA operon. Processes pre-crRNA and tracrRNA of type II CRISPR loci if present in the organism. This Cupriavidus taiwanensis (strain DSM 17343 / BCRC 17206 / CCUG 44338 / CIP 107171 / LMG 19424 / R1) (Ralstonia taiwanensis (strain LMG 19424)) protein is Ribonuclease 3.